Consider the following 448-residue polypeptide: ATP-dependent RNA helicase sub2 (448 aa).

Positions 19–29 (DAAATTAAPAA) are enriched in low complexity. A disordered region spans residues 19-43 (DAAATTAAPAANGAQDKKGDLTVSG). The short motif at 58–86 (TGFRDFLLKGELLRAITDCGFEHPSEVQQ) is the Q motif element. The region spanning 89 to 271 (IPTAILNVDV…KKFMRNPLEV (183 aa)) is the Helicase ATP-binding domain. 102–109 (AKSGLGKT) is an ATP binding site. A DECD box motif is present at residues 211–214 (DECD). The Helicase C-terminal domain occupies 283–444 (GLQQYYIKLS…EYPEGGVDSS (162 aa)).

This sequence belongs to the DEAD box helicase family. DECD subfamily.

The protein resides in the nucleus. The enzyme catalyses ATP + H2O = ADP + phosphate + H(+). In terms of biological role, ATP-binding RNA helicase involved in transcription elongation and required for the export of mRNA out of the nucleus. SUB2 also plays a role in pre-mRNA splicing and spliceosome assembly. May be involved in rDNA and telomeric silencing, and maintenance of genome integrity. The protein is ATP-dependent RNA helicase sub2 (sub2) of Aspergillus fumigatus (strain ATCC MYA-4609 / CBS 101355 / FGSC A1100 / Af293) (Neosartorya fumigata).